We begin with the raw amino-acid sequence, 156 residues long: Enhancer of split M1 protein (156 aa).

The N-terminal stretch at 1-19 (MMSQTLTLCCLGLVACVYG) is a signal peptide. 2 consecutive Kazal-like domains span residues 23-81 (STND…AWCS) and 96-156 (KLEV…EEKC). Disulfide bonds link Cys-29–Cys-62, Cys-33–Cys-55, Cys-102–Cys-135, Cys-106–Cys-128, and Cys-114–Cys-156.

The sequence is that of Enhancer of split M1 protein from Drosophila simulans (Fruit fly).